The following is a 424-amino-acid chain: UPF0597 protein Sbal_3070 (424 aa).

The protein belongs to the UPF0597 family.

This Shewanella baltica (strain OS155 / ATCC BAA-1091) protein is UPF0597 protein Sbal_3070.